The sequence spans 273 residues: Putative pyruvate, phosphate dikinase regulatory protein (273 aa).

ADP is bound at residue 151–158; the sequence is GVSRTSKT.

It belongs to the pyruvate, phosphate/water dikinase regulatory protein family. PDRP subfamily.

The catalysed reaction is N(tele)-phospho-L-histidyl/L-threonyl-[pyruvate, phosphate dikinase] + ADP = N(tele)-phospho-L-histidyl/O-phospho-L-threonyl-[pyruvate, phosphate dikinase] + AMP + H(+). It carries out the reaction N(tele)-phospho-L-histidyl/O-phospho-L-threonyl-[pyruvate, phosphate dikinase] + phosphate + H(+) = N(tele)-phospho-L-histidyl/L-threonyl-[pyruvate, phosphate dikinase] + diphosphate. Its function is as follows. Bifunctional serine/threonine kinase and phosphorylase involved in the regulation of the pyruvate, phosphate dikinase (PPDK) by catalyzing its phosphorylation/dephosphorylation. This Desulfitobacterium hafniense (strain DSM 10664 / DCB-2) protein is Putative pyruvate, phosphate dikinase regulatory protein.